Consider the following 311-residue polypeptide: HPr kinase/phosphorylase (311 aa).

Residues His-139 and Lys-160 contribute to the active site. An ATP-binding site is contributed by 154-161 (GDSGVGKS). Mg(2+) is bound at residue Ser-161. Asp-178 serves as the catalytic Proton acceptor; for phosphorylation activity. Proton donor; for dephosphorylation activity. Residues 202–211 (LEIRGIGIID) are important for the catalytic mechanism of both phosphorylation and dephosphorylation. Glu-203 is a Mg(2+) binding site. Residue Arg-244 is part of the active site. The important for the catalytic mechanism of dephosphorylation stretch occupies residues 265–270 (PVKTGR).

It belongs to the HPrK/P family. Homohexamer. Mg(2+) is required as a cofactor.

The enzyme catalyses [HPr protein]-L-serine + ATP = [HPr protein]-O-phospho-L-serine + ADP + H(+). It carries out the reaction [HPr protein]-O-phospho-L-serine + phosphate + H(+) = [HPr protein]-L-serine + diphosphate. Catalyzes the ATP- as well as the pyrophosphate-dependent phosphorylation of a specific serine residue in HPr, a phosphocarrier protein of the phosphoenolpyruvate-dependent sugar phosphotransferase system (PTS). HprK/P also catalyzes the pyrophosphate-producing, inorganic phosphate-dependent dephosphorylation (phosphorolysis) of seryl-phosphorylated HPr (P-Ser-HPr). The two antagonistic activities of HprK/P are regulated by several intracellular metabolites, which change their concentration in response to the absence or presence of rapidly metabolisable carbon sources (glucose, fructose, etc.) in the growth medium. Therefore, by controlling the phosphorylation state of HPr, HPrK/P is a sensor enzyme that plays a major role in the regulation of carbon metabolism and sugar transport: it mediates carbon catabolite repression (CCR), and regulates PTS-catalyzed carbohydrate uptake and inducer exclusion. The sequence is that of HPr kinase/phosphorylase from Levilactobacillus brevis (strain ATCC 367 / BCRC 12310 / CIP 105137 / JCM 1170 / LMG 11437 / NCIMB 947 / NCTC 947) (Lactobacillus brevis).